Reading from the N-terminus, the 562-residue chain is MALSKSMHARNRYKDKPPDFAYLASKYPDFKQHVQINLNGRVSLNFKDPEAVRALTCTLLREDFGLSIDIPLERLIPTVPLRLNYIHWVEDLIGHQDSDKSTLRRGIDIGTGASCIYPLLGATLNGWYFLATEVDDMCFNYAKKNVEQNNLSDLIKVVKVPQKTLLMDALKEESEIIYDFCMCNPPFFANQLEAKGVNSRNPRRPPPSSVNTGGITEIMAEGGELEFVKRIIHDSLQLKKRLRWYSCMLGKKCSLAPLKEELRIQGVPKVTYTEFCQGRTMRWALAWSFYDDVTVPSPPSKRRKLEKPRKPITFVVLASVMKELSLKASPLRSETAEGIVVVTTWIEKILTDLKVQHKRVPCGKEEVSLFLTAIENSWIHLRRKKRERVRQLREVPRAPEDVIQALEEKKPTPKESGNSQELARGPQERTPCGPALREGEAAAVEGPCPSQESLSQEENPEPTEDERSEEKGGVEVLESCQGSSNGAQDQEASEQFGSPVAERGKRLPGVAGQYLFKCLINVKKEVDDALVEMHWVEGQNRDLMNQLCTYIRNQIFRLVAVN.

The segment at 17-20 (PPDF) is RNA-binding. 6 residues coordinate S-adenosyl-L-methionine: Arg82, Gly110, Ser114, Glu133, Thr164, and Asn184. Residues 163–167 (KTLLM) are K-loop. RNA-binding stretches follow at residues 199–211 (SRNP…SSVN), 250–254 (GKKCS), and 277–283 (QGRTMRW). The segment at 289 to 400 (FYDDVTVPSP…QLREVPRAPE (112 aa)) is VCR 1. Position 329 is a phosphoserine (Ser329). The segment covering 402-413 (VIQALEEKKPTP) has biased composition (basic and acidic residues). Positions 402 to 498 (VIQALEEKKP…DQEASEQFGS (97 aa)) are disordered. A compositionally biased stretch (acidic residues) spans 458–467 (ENPEPTEDER). Residue Thr463 is modified to Phosphothreonine. Positions 480–496 (CQGSSNGAQDQEASEQF) are enriched in polar residues. The VCR 2 stretch occupies residues 514 to 562 (YLFKCLINVKKEVDDALVEMHWVEGQNRDLMNQLCTYIRNQIFRLVAVN).

It belongs to the methyltransferase superfamily. METTL16/RlmF family. Interacts with MEPCE. Interacts with LARP7.

Its subcellular location is the nucleus. It localises to the cytoplasm. The catalysed reaction is adenosine in U6 snRNA + S-adenosyl-L-methionine = N(6)-methyladenosine in U6 snRNA + S-adenosyl-L-homocysteine + H(+). It catalyses the reaction an adenosine in mRNA + S-adenosyl-L-methionine = an N(6)-methyladenosine in mRNA + S-adenosyl-L-homocysteine + H(+). With respect to regulation, methyltransferase activity is autoinhibited by the K-loop region that blocks S-adenosyl-L-methionine-binding. Upon activation, K-loop changes conformation, allowing S-adenosyl-L-methionine-binding and subsequent methyltransferase activity. mRNA N6-adenosine-methyltransferase activity is inhibited by zinc. RNA N6-methyltransferase that methylates adenosine residues at the N(6) position of a subset of RNAs and is involved in S-adenosyl-L-methionine homeostasis by regulating expression of MAT2A transcripts. Able to N6-methylate a subset of mRNAs and U6 small nuclear RNAs (U6 snRNAs). In contrast to the METTL3-METTL14 heterodimer, only able to methylate a limited number of RNAs: requires both a 5'UACAGAGAA-3' nonamer sequence and a specific RNA structure. Plays a key role in S-adenosyl-L-methionine homeostasis by mediating N6-methylation of MAT2A mRNAs, altering splicing of MAT2A transcripts: in presence of S-adenosyl-L-methionine, binds the 3'-UTR region of MAT2A mRNA and specifically N6-methylates the first hairpin of MAT2A mRNA, preventing recognition of their 3'-splice site by U2AF1/U2AF35, thereby inhibiting splicing and protein production of S-adenosylmethionine synthase. In S-adenosyl-L-methionine-limiting conditions, binds the 3'-UTR region of MAT2A mRNA but stalls due to the lack of a methyl donor, preventing N6-methylation and promoting expression of MAT2A. In addition to mRNAs, also able to mediate N6-methylation of U6 small nuclear RNA (U6 snRNA): specifically N6-methylates adenine in position 43 of U6 snRNAs. Also able to bind various lncRNAs, such as 7SK snRNA (7SK RNA) or 7SL RNA. Specifically binds the 3'-end of the MALAT1 long non-coding RNA. In Homo sapiens (Human), this protein is RNA N(6)-adenosine-methyltransferase METTL16.